Reading from the N-terminus, the 220-residue chain is MASTDDPAGQRPSRAEAIVAHAEQSISEDAIVAAARERAVDIGAGAVTPAVGALLSVLARLTEAKAVVEVGTGAGVSGLWLLSGMREDGVLTTIDVEPEHQRIAKQAFIEAGIGPSRTRLISGRAQEVLTRLADESYDLVFIDGDPADQPQFVVEGVRLLRPGGAIVVHRAALGGRAGDAAANDAEVSAVREAARLIAEDERLTPVLVPLGDGLLVAARD.

S-adenosyl-L-methionine contacts are provided by residues V47, E69, 71 to 72 (GT), S77, D95, and V96. A substrate-binding site is contributed by D143. S-adenosyl-L-methionine is bound at residue D145.

It belongs to the class I-like SAM-binding methyltransferase superfamily. Cation-dependent O-methyltransferase family.

The sequence is that of Putative O-methyltransferase Mjls_4009 from Mycobacterium sp. (strain JLS).